Consider the following 653-residue polypeptide: Probable sulfate transporter 3.4 (653 aa).

Topologically, residues 1–92 (MGHGTNRVED…QYDLKLLRSD (92 aa)) are cytoplasmic. A helical membrane pass occupies residues 93–113 (VISGLTIASLAIPQGISYAKL). The Extracellular segment spans residues 114–115 (AN). Residues 116–136 (LPPIVGLYSSFVPPLIYAVLG) traverse the membrane as a helical segment. The Cytoplasmic portion of the chain corresponds to 137–140 (SSRH). Residues 141 to 161 (LAVGPVSIASLVMGSMLSESV) form a helical membrane-spanning segment. Residues 162-167 (SPTQDS) are Extracellular-facing. The helical transmembrane segment at 168–188 (ILYLKLAFTSTFFAGVFQASL) threads the bilayer. Residues 189-194 (GLLRLG) are Cytoplasmic-facing. The helical transmembrane segment at 195-215 (FMIDFLSKATLIGFTAGAAVI) threads the bilayer. Over 216–247 (VSLQQLKGLLGIVHFTGKMQIVPVMSSVFNHR) the chain is Extracellular. A helical transmembrane segment spans residues 248-268 (SEWSWETIVMGIGFLSILLTT). The Cytoplasmic portion of the chain corresponds to 269 to 279 (RHISMRKPKLF). A helical transmembrane segment spans residues 280–300 (WISAASPLASVIISTLLVYLI). Over 301–331 (RSKTHAISFIGHLPKGLNPPSLNMLYFSGAH) the chain is Extracellular. Residues 332–352 (LALAIKTGIITGILSLTEGIA) form a helical membrane-spanning segment. At 353 to 370 (VGRTFASLKNYQVNGNKE) the chain is on the cytoplasmic side. A helical membrane pass occupies residues 371–391 (MMAIGFMNMAGSCTSCYVTTG). Over 392–407 (SFSRSAVNYNAGAKTA) the chain is Extracellular. Residues 408-428 (VSNIVMASAVLVTLLFLMPLF) form a helical membrane-spanning segment. Topologically, residues 429–433 (YYTPN) are cytoplasmic. A helical transmembrane segment spans residues 434 to 454 (VILAAIILTAVIGLIDYQAAY). Topologically, residues 455 to 471 (KLWKVDKFDFFTCLCSF) are extracellular. The helical transmembrane segment at 472–492 (FGVLFVSVPLGLAIAVAVSVI) threads the bilayer. At 493–653 (KILLHVTRPN…SSTWKANGQP (161 aa)) the chain is on the cytoplasmic side. In terms of domain architecture, STAS spans 520 to 643 (RYREASRIPG…LTVGEAVADL (124 aa)).

This sequence belongs to the SLC26A/SulP transporter (TC 2.A.53) family.

It localises to the membrane. H(+)/sulfate cotransporter that may play a role in the regulation of sulfate assimilation. This chain is Probable sulfate transporter 3.4 (SULTR3;4), found in Arabidopsis thaliana (Mouse-ear cress).